The primary structure comprises 597 residues: uncharacterized protein (597 aa).

A Helicase ATP-binding domain is found at 48–198 (LHPYNPYSSL…DSILSLTKET (151 aa)). 61–68 (YDVGLGKT) is a binding site for ATP. Positions 146 to 149 (DEVH) match the DEVH box motif. The Helicase C-terminal domain maps to 275-467 (KINAFINSIK…DIPKIDNEMV (193 aa)).

The protein belongs to the helicase family.

The presence of the two linear plasmids, termed pGKL1 and pGKL2, in strains of Kluyveromyces lactis confers the killer phenotype to the host cell, by promoting the secretion of a toxin able to inhibit the growth of sensitive strains. This is an uncharacterized protein from Kluyveromyces lactis (strain ATCC 8585 / CBS 2359 / DSM 70799 / NBRC 1267 / NRRL Y-1140 / WM37) (Yeast).